The following is a 385-amino-acid chain: Glucans biosynthesis protein C (385 aa).

A run of 10 helical transmembrane segments spans residues alanine 17–tryptophan 37, methionine 60–leucine 80, valine 91–glutamine 111, isoleucine 137–phenylalanine 157, lysine 173–isoleucine 193, phenylalanine 212–isoleucine 232, leucine 239–leucine 259, threonine 274–glycine 294, alanine 311–threonine 331, and tryptophan 338–isoleucine 358.

The protein belongs to the acyltransferase 3 family. OpgC subfamily.

It is found in the cell membrane. It participates in glycan metabolism; osmoregulated periplasmic glucan (OPG) biosynthesis. Its function is as follows. Necessary for the succinyl substitution of periplasmic glucans. Could catalyze the transfer of succinyl residues from the cytoplasmic side of the membrane to the nascent glucan backbones on the periplasmic side of the membrane. This is Glucans biosynthesis protein C from Shigella boydii serotype 4 (strain Sb227).